The primary structure comprises 341 residues: MKFVDEALIKVEAGKGGNGCLSFRREKFIPRGGPDGGDGGDGGSIYFEASSDLNTLIDFRYTRQYKAENGQSGMGGNCTGKKGEDLTIKVPVGTMVYDADTGELLADISQPGVPMLIAQGGFHGLGNTRYKSSVNRSPRQTTPGSPGESRNLRLELRVLADVGLLGLPNAGKSTLIRAVSSSKAKVADYPFTTLHPGLGVVRVSPYKSFVMADIPGLIEGAAQGAGLGHRFLKHLSRTCVLLHVIDIAPLDGSDPVADAKAILNELTQYNPDLLNKPRWLVLNKIDMLPDAKEREEKIQSIIKGLEWKDKVFSISAIESKGTQELCYALMQLIDEMKKSEA.

Positions 1-159 (MKFVDEALIK…RNLRLELRVL (159 aa)) constitute an Obg domain. A disordered region spans residues 128 to 150 (TRYKSSVNRSPRQTTPGSPGESR). A compositionally biased stretch (polar residues) spans 129-144 (RYKSSVNRSPRQTTPG). The region spanning 160–334 (ADVGLLGLPN…LCYALMQLID (175 aa)) is the OBG-type G domain. Residues 166-173 (GLPNAGKS), 191-195 (FTTLH), 213-216 (DIPG), 283-286 (NKID), and 315-317 (SAI) each bind GTP. 2 residues coordinate Mg(2+): Ser-173 and Thr-193.

The protein belongs to the TRAFAC class OBG-HflX-like GTPase superfamily. OBG GTPase family. Monomer. Requires Mg(2+) as cofactor.

It is found in the cytoplasm. Its function is as follows. An essential GTPase which binds GTP, GDP and possibly (p)ppGpp with moderate affinity, with high nucleotide exchange rates and a fairly low GTP hydrolysis rate. Plays a role in control of the cell cycle, stress response, ribosome biogenesis and in those bacteria that undergo differentiation, in morphogenesis control. The sequence is that of GTPase Obg from Legionella pneumophila (strain Lens).